The primary structure comprises 598 residues: Probable translation initiation factor IF-2 (598 aa).

The tr-type G domain maps to 3–225 (LRCPIVSVLG…GLAQKFLEQK (223 aa)). A G1 region spans residues 12-19 (GHVDHGKT). A GTP-binding site is contributed by 12 to 19 (GHVDHGKT). The segment at 37-41 (GITQH) is G2. Positions 76–79 (DTPG) are G3. GTP contacts are provided by residues 76–80 (DTPGH) and 130–133 (NKLD). A G4 region spans residues 130 to 133 (NKLD). The interval 200 to 202 (SAM) is G5.

The protein belongs to the TRAFAC class translation factor GTPase superfamily. Classic translation factor GTPase family. IF-2 subfamily.

Functionally, function in general translation initiation by promoting the binding of the formylmethionine-tRNA to ribosomes. Seems to function along with eIF-2. In Methanococcus maripaludis (strain C6 / ATCC BAA-1332), this protein is Probable translation initiation factor IF-2.